The following is a 290-amino-acid chain: Probable ECF RNA polymerase sigma factor SigI (290 aa).

The segment at 11 to 74 (WRAHRAYLVD…LCLDHIKSAS (64 aa)) is sigma-70 factor domain-2. Positions 34–37 (DMVQ) match the Polymerase core binding motif. The segment at 110–162 (LALLIMLERLGPAERVVFVLHEIFGLPYQQIATTIGSQASTCRQLAHRARRKI) is sigma-70 factor domain-4_2. A DNA-binding region (H-T-H motif) is located at residues 137–156 (YQQIATTIGSQASTCRQLAH).

This sequence belongs to the sigma-70 factor family. ECF subfamily. As to quaternary structure, interacts transiently with the RNA polymerase catalytic core formed by RpoA, RpoB, RpoC and RpoZ (2 alpha, 1 beta, 1 beta' and 1 omega subunit) to form the RNA polymerase holoenzyme that can initiate transcription.

Its function is as follows. Sigma factors are initiation factors that promote the attachment of RNA polymerase to specific initiation sites and are then released. Extracytoplasmic function (ECF) sigma factors are held in an inactive form by a cognate anti-sigma factor until released, although no anti-sigma factor is known for this protein. This is Probable ECF RNA polymerase sigma factor SigI (sigI) from Mycobacterium tuberculosis (strain CDC 1551 / Oshkosh).